We begin with the raw amino-acid sequence, 111 residues long: Large ribosomal subunit protein uL22 (111 aa).

It belongs to the universal ribosomal protein uL22 family. Part of the 50S ribosomal subunit.

Its function is as follows. This protein binds specifically to 23S rRNA; its binding is stimulated by other ribosomal proteins, e.g. L4, L17, and L20. It is important during the early stages of 50S assembly. It makes multiple contacts with different domains of the 23S rRNA in the assembled 50S subunit and ribosome. Functionally, the globular domain of the protein is located near the polypeptide exit tunnel on the outside of the subunit, while an extended beta-hairpin is found that lines the wall of the exit tunnel in the center of the 70S ribosome. This is Large ribosomal subunit protein uL22 from Clostridioides difficile (strain 630) (Peptoclostridium difficile).